Consider the following 468-residue polypeptide: MVERRCYDKVNDKVLLISGMQWGDEGKGKLVTHLSKDFDLVARYNGGHNSGHEMYLDGVKYKLHSLPCGVLVPNTLNVLGNGVVVHLESLLSEIDGLLKLGIDLTNRLFISERAHLVLDLHIAIDSQLESEQGEYSTTIGTTKRGIGPTNSTKCKRTGIQLGELLNWDNFEKLLTKLTYKLNHENKVFSNSDLADLLNKELEIYKTNFSKIAHCVCDTSYMIQKYIKEGKKVFFEGANGALLDLALGTYPYVTSSNTTTSGVYNGLGISPSVKILKVGVLKAYQTRIGQGPFPTELFDDNYVKLQKHGSEVGVTTGRTRRCGWLDLVSAKYVQGFSGFDVINLTKLDVLSQFDEVKLCTNYKHKVTGTTLKNLLPPFRYLHNTIYREFLEEGRYPNCCYQFDEYEPVYKTMPGWKTDISDFKTFEQLPQNAQNYVLFIEEYLGVFIHWVCLFINNITFRWELAKMLIK.

GTP is bound by residues 23–29 and 51–53; these read GDEGKGK and GHE. Catalysis depends on D24, which acts as the Proton acceptor. The Mg(2+) site is built by D24 and G51. IMP-binding positions include 24-27, 49-52, T142, R156, N238, T253, and R317; these read DEGK and NSGH. The active-site Proton donor is the H52. Residue 313 to 319 coordinates substrate; sequence VTTGRTR. GTP contacts are provided by residues R319 and 345 to 347; that span reads KLD.

This sequence belongs to the adenylosuccinate synthetase family. Homodimer. Requires Mg(2+) as cofactor.

Its subcellular location is the cytoplasm. It catalyses the reaction IMP + L-aspartate + GTP = N(6)-(1,2-dicarboxyethyl)-AMP + GDP + phosphate + 2 H(+). It participates in purine metabolism; AMP biosynthesis via de novo pathway; AMP from IMP: step 1/2. Functionally, plays an important role in the salvage pathway for purine nucleotide biosynthesis. Catalyzes the first committed step in the biosynthesis of AMP from IMP. This chain is Adenylosuccinate synthetase, found in Theileria annulata.